Here is a 225-residue protein sequence, read N- to C-terminus: F-box protein SKIP27 (225 aa).

An F-box domain is found at 121–169; the sequence is KSRLECLPQDLLIRVICGVDHEDLKSLKLVSKSIREASLVAKTLHFAYT.

In terms of assembly, part of a SCF (ASK-cullin-F-box) protein ligase complex. Interacts with SKP1A/ASK1 and SPK1B/ASK2.

It is found in the nucleus. It participates in protein modification; protein ubiquitination. In terms of biological role, component of SCF(ASK-cullin-F-box) E3 ubiquitin ligase complexes, which may mediate the ubiquitination and subsequent proteasomal degradation of target proteins. In Arabidopsis thaliana (Mouse-ear cress), this protein is F-box protein SKIP27 (SKIP27).